We begin with the raw amino-acid sequence, 211 residues long: Histone H1-beta, late embryonic (211 aa).

Disordered stretches follow at residues 1-22 (MAAE…PSSS) and 81-211 (KGAS…AAKK). Residues 17–91 (AHPSSSEMVL…GASGSFKLGK (75 aa)) enclose the H15 domain. Basic and acidic residues-rich tracts occupy residues 95–107 (GKSD…DAAK) and 114–123 (KKKEAKEKKA). 2 stretches are compositionally biased toward basic residues: residues 124–177 (ARSK…KKAA) and 185–211 (KAAK…AAKK).

This sequence belongs to the histone H1/H5 family.

It is found in the nucleus. Its subcellular location is the chromosome. Its function is as follows. Histones H1 are necessary for the condensation of nucleosome chains into higher-order structures. This Strongylocentrotus purpuratus (Purple sea urchin) protein is Histone H1-beta, late embryonic.